The chain runs to 357 residues: UDP-arabinopyranose mutase 1 (357 aa).

Position 2 is an N-acetylvaline (valine 2). The DXD motif motif lies at 110-112; that stretch reads DDD. An N-linked (Glc...) arginine glycan is attached at arginine 158.

This sequence belongs to the RGP family. Heteromers with RGP2, RGP3, RGP4 and RGP5. Mn(2+) is required as a cofactor. It depends on Mg(2+) as a cofactor. Reversibly glycosylated in vitro by UDP-glucose, UDP-xylose and UDP-galactose, but not UDP-mannose. Predominantly expressed in shoot and root apical meristems. Expressed in epidermal cells of leaves, inflorescence stems and seed coat. Expressed in pollen.

The protein localises to the cytoplasm. Its subcellular location is the cytosol. The protein resides in the golgi apparatus. The enzyme catalyses UDP-beta-L-arabinofuranose = UDP-beta-L-arabinopyranose. In terms of biological role, UDP-L-arabinose mutase involved in the biosynthesis of cell wall non-cellulosic polysaccharides. Catalyzes the interconvertion of UDP-L-arabinopyranose (UDP-Arap) and UDP-L-arabinofuranose (UDP-Araf) in vitro. Preferentially catalyzes the formation of UDP-Arap from UDP-Araf. At thermodynamic equilibrium in vitro the ratio of the pyranose form over the furanose form is 95:5. Is not active on other UDP-sugars (UDP-Gal, UDP-Xyl, UDP-Glc, GDP-Man and GDP-Fuc). Functions redundantly with RGP2 and is essential for proper cell walls and pollen development. Probably involved in the formation of the pectocellulosic cell wall layer intine. Is probably active as heteromer in vivo. The polypeptide is UDP-arabinopyranose mutase 1 (Arabidopsis thaliana (Mouse-ear cress)).